Consider the following 106-residue polypeptide: Urease subunit beta (106 aa).

It belongs to the urease beta subunit family. In terms of assembly, heterotrimer of UreA (gamma), UreB (beta) and UreC (alpha) subunits. Three heterotrimers associate to form the active enzyme.

The protein localises to the cytoplasm. The enzyme catalyses urea + 2 H2O + H(+) = hydrogencarbonate + 2 NH4(+). The protein operates within nitrogen metabolism; urea degradation; CO(2) and NH(3) from urea (urease route): step 1/1. The chain is Urease subunit beta from Prochlorococcus marinus (strain MIT 9215).